The chain runs to 90 residues: DNA-binding protein HU (90 aa).

T4 carries the post-translational modification Phosphothreonine. Residues 56–90 (AARKGRNPQTGEEMEIPASKVPAFKPGKALKDAVK) form a disordered region.

This sequence belongs to the bacterial histone-like protein family. Homodimer.

Histone-like DNA-binding protein which is capable of wrapping DNA to stabilize it, and thus to prevent its denaturation under extreme environmental conditions. The chain is DNA-binding protein HU (hup) from Geobacillus stearothermophilus (Bacillus stearothermophilus).